An 86-amino-acid chain; its full sequence is Exodeoxyribonuclease 7 small subunit (86 aa).

The protein belongs to the XseB family. As to quaternary structure, heterooligomer composed of large and small subunits.

The protein localises to the cytoplasm. It catalyses the reaction Exonucleolytic cleavage in either 5'- to 3'- or 3'- to 5'-direction to yield nucleoside 5'-phosphates.. Functionally, bidirectionally degrades single-stranded DNA into large acid-insoluble oligonucleotides, which are then degraded further into small acid-soluble oligonucleotides. This chain is Exodeoxyribonuclease 7 small subunit, found in Xanthomonas axonopodis pv. citri (strain 306).